The sequence spans 232 residues: Clarin-2 (232 aa).

The chain crosses the membrane as a helical span at residues 10-30; it reads YGLASLLSFSSFILIIVALVV. N48 carries an N-linked (GlcNAc...) asparagine glycan. 3 helical membrane-spanning segments follow: residues 101–121, 139–159, and 188–208; these read ILLLLFLALALALVSMGFAIL, LWNVLAGGVVALAIASFVAAV, and SFWICVASASAHAANLVVVAI.

It belongs to the clarin family.

Its subcellular location is the cell projection. It is found in the stereocilium membrane. Plays a key role to hearing function. Required for normal organization and maintenance of the stereocilia bundle and for mechano-electrical transduction. The protein is Clarin-2 of Homo sapiens (Human).